The primary structure comprises 247 residues: E3 ubiquitin-protein ligase RNF182 (247 aa).

The segment at C20–R68 adopts an RING-type zinc-finger fold. 2 helical membrane passes run V184 to L204 and L211 to F231.

As to quaternary structure, interacts with ATP6V0C.

The protein resides in the membrane. It is found in the cytoplasm. It catalyses the reaction S-ubiquitinyl-[E2 ubiquitin-conjugating enzyme]-L-cysteine + [acceptor protein]-L-lysine = [E2 ubiquitin-conjugating enzyme]-L-cysteine + N(6)-ubiquitinyl-[acceptor protein]-L-lysine.. The protein operates within protein modification; protein ubiquitination. Its function is as follows. E3 ubiquitin-protein ligase that mediates the ubiquitination of ATP6V0C and targets it to degradation via the ubiquitin-proteasome pathway. Also plays a role in the inhibition of TLR-triggered innate immune response by mediating 'Lys'-48-linked ubiquitination and subsequent degradation of NF-kappa-B component RELA. The protein is E3 ubiquitin-protein ligase RNF182 (Rnf182) of Rattus norvegicus (Rat).